A 675-amino-acid chain; its full sequence is NADH-ubiquinone oxidoreductase 75 kDa subunit (675 aa).

In terms of domain architecture, 2Fe-2S ferredoxin-type spans 2–80; it reads KNISFKVNDF…SMNIYTNTLK (79 aa). [2Fe-2S] cluster contacts are provided by C36, C47, C50, and C64. One can recognise a 4Fe-4S His(Cys)3-ligated-type domain in the interval 80–119; the sequence is KVKKARESVLEFLLANHPLDCPICDQGGECDLQDQSVVFG. [4Fe-4S] cluster contacts are provided by H96, C100, C103, C109, C148, C151, C154, and C198. In terms of domain architecture, 4Fe-4S Mo/W bis-MGD-type spans 217–273; that stretch reads LKSYNSIDVLDSLHSNIRVDIRGTKIMRILPRVNSELNEDWITDKIRFSYDSFRRQR.

The protein belongs to the complex I 75 kDa subunit family. In terms of assembly, complex I is composed of about 30 different subunits. [2Fe-2S] cluster is required as a cofactor. [4Fe-4S] cluster serves as cofactor.

The protein resides in the mitochondrion inner membrane. It carries out the reaction a ubiquinone + NADH + 5 H(+)(in) = a ubiquinol + NAD(+) + 4 H(+)(out). Core subunit of the mitochondrial membrane respiratory chain NADH dehydrogenase (Complex I) that is believed to belong to the minimal assembly required for catalysis. Complex I functions in the transfer of electrons from NADH to the respiratory chain. The immediate electron acceptor for the enzyme is believed to be ubiquinone. This is the largest subunit of complex I and it is a component of the iron-sulfur (IP) fragment of the enzyme. It may form part of the active site crevice where NADH is oxidized. This Acanthamoeba castellanii (Amoeba) protein is NADH-ubiquinone oxidoreductase 75 kDa subunit (NAD11).